A 378-amino-acid chain; its full sequence is Glutamate 5-kinase (378 aa).

Residue Lys-20 participates in ATP binding. Ser-60, Asp-147, and Asn-159 together coordinate substrate. Residues 179–180 (TD) and 221–227 (TGGMLTK) each bind ATP. A PUA domain is found at 286-364 (RGRVVLDDGA…SQIARILGSM (79 aa)).

Belongs to the glutamate 5-kinase family.

Its subcellular location is the cytoplasm. The enzyme catalyses L-glutamate + ATP = L-glutamyl 5-phosphate + ADP. It functions in the pathway amino-acid biosynthesis; L-proline biosynthesis; L-glutamate 5-semialdehyde from L-glutamate: step 1/2. Functionally, catalyzes the transfer of a phosphate group to glutamate to form L-glutamate 5-phosphate. This is Glutamate 5-kinase from Bordetella parapertussis (strain 12822 / ATCC BAA-587 / NCTC 13253).